Consider the following 516-residue polypeptide: UDP-N-acetylmuramyl-tripeptide synthetase (516 aa).

Residue Ser38 coordinates UDP-N-acetyl-alpha-D-muramoyl-L-alanyl-D-glutamate. 116-122 (GTKGKTT) contacts ATP. UDP-N-acetyl-alpha-D-muramoyl-L-alanyl-D-glutamate contacts are provided by residues 162-163 (TT), Ser189, and Arg197. The residue at position 231 (Lys231) is an N6-carboxylysine.

Belongs to the MurCDEF family. MurE subfamily. Carboxylation is probably crucial for Mg(2+) binding and, consequently, for the gamma-phosphate positioning of ATP.

The protein localises to the cytoplasm. It functions in the pathway cell wall biogenesis; peptidoglycan biosynthesis. In terms of biological role, catalyzes the addition of an amino acid to the nucleotide precursor UDP-N-acetylmuramoyl-L-alanyl-D-glutamate (UMAG) in the biosynthesis of bacterial cell-wall peptidoglycan. In Lactobacillus delbrueckii subsp. bulgaricus (strain ATCC 11842 / DSM 20081 / BCRC 10696 / JCM 1002 / NBRC 13953 / NCIMB 11778 / NCTC 12712 / WDCM 00102 / Lb 14), this protein is UDP-N-acetylmuramyl-tripeptide synthetase.